Here is a 788-residue protein sequence, read N- to C-terminus: Ribonucleoside-diphosphate reductase large subunit (788 aa).

Residues 7–98 (TYVVKRDGRK…VSNLHKKTNK (92 aa)) enclose the ATP-cone domain. Residues 11–12 (KR), 17–23 (EDVHFDK), T59, and D63 each bind ATP. Residues S208 and S223 each contribute to the GDP site. The cysteines at positions 224 and 450 are disulfide-linked. DTTP is bound by residues 232–234 (DSI), K249, R262, and 269–270 (AG). GDP is bound at residue N433. N433 (proton acceptor) is an active-site residue. Residue C435 is the Cysteine radical intermediate of the active site. GDP-binding positions include E437 and 610 to 613 (TAST). E437 acts as the Proton acceptor in catalysis.

It belongs to the ribonucleoside diphosphate reductase large chain family. Heterodimer of a large and a small subunit.

It catalyses the reaction a 2'-deoxyribonucleoside 5'-diphosphate + [thioredoxin]-disulfide + H2O = a ribonucleoside 5'-diphosphate + [thioredoxin]-dithiol. Under complex allosteric control mediated by deoxynucleoside triphosphates and ATP binding to separate specificity and activation sites on the large subunit. The type of nucleotide bound at the specificity site determines substrate preference. It seems probable that ATP makes the enzyme reduce CDP and UDP, dGTP favors ADP reduction and dTTP favors GDP reduction. Stimulated by ATP and inhibited by dATP binding to the activity site. Functionally, provides the precursors necessary for DNA synthesis. Catalyzes the biosynthesis of deoxyribonucleotides from the corresponding ribonucleotides. The sequence is that of Ribonucleoside-diphosphate reductase large subunit (rnr-1) from Caenorhabditis elegans.